The chain runs to 89 residues: MIIAAYLVLINLCGFWVMGIDKRKAQQHKWRISEDRLWLIAIVFGALGVWLGMQTFRHKTKHASFKYGVPLLLVIEAILIAIYYSPFDL.

The next 3 helical transmembrane spans lie at 5 to 25 (AYLV…KRKA), 36 to 56 (RLWL…MQTF), and 67 to 87 (YGVP…YSPF).

The protein localises to the cell membrane. This is an uncharacterized protein from Bacillus subtilis (strain 168).